The primary structure comprises 4882 residues: Dual E2 ubiquitin-conjugating enzyme/E3 ubiquitin-protein ligase BIRC6 (4882 aa).

2 WD repeats span residues 71 to 109 (DGLH…QASA) and 110 to 139 (LSAK…AVGC). A BIR repeat occupies 292–362 (RRETFTSWPH…RHSPNCPFVK (71 aa)). Residues Cys331, Cys334, His351, and Cys358 each contribute to the Zn(2+) site. Residues 382–429 (LPSADGADRIACFGSGSCPQFLAAATKRGKICIWDVSKLMKVHLKFEI) form a WD 3 repeat. Disordered stretches follow at residues 468 to 502 (DIPK…SQKE), 542 to 561 (GANP…KHQE), and 582 to 622 (ATSP…SELN). Over residues 475 to 485 (DSDDLLEDSDS) the composition is skewed to acidic residues. Residues Ser476, Ser483, and Ser485 each carry the phosphoserine modification. 4 WD repeats span residues 504 to 723 (MEVS…VQCL), 733 to 854 (TLCI…QHIK), 855 to 931 (DPQD…AKVE), and 932 to 970 (PPKK…FLQI). Positions 551–561 (KSEKTKEKHQE) are enriched in basic and acidic residues. The span at 582–591 (ATSPISSNSH) shows a compositional bias: polar residues. A phosphoserine mark is found at Ser584 and Ser593. Positions 598–622 (SRTQGESISEQGSTDNESCTNSELN) are enriched in polar residues. The interval 1057–1077 (QQQRRHPQHLHQQHHGDAAQH) is disordered. Basic residues predominate over residues 1060–1069 (RRHPQHLHQQ). Position 1724 is a phosphothreonine (Thr1724). 2 positions are modified to phosphoserine: Ser2245 and Ser2978. Residues 2969–2998 (VTTNTTDSVSDEEKVSGGKDVNGSSASTPG) are disordered. An HRRAR loop; important for DIABLO/SMAC and HTRA2 binding region spans residues 3212 to 3216 (HRRAR). Residues 3842–4092 (DEKVTMFLQS…ESLLETCPIQ (251 aa)) enclose the Ubiquitin-like domain. Disordered stretches follow at residues 3908–3927 (SEQK…KVKA) and 3943–3973 (LKSQ…IGSA). The residue at position 3954 (Thr3954) is a Phosphothreonine. Phosphoserine is present on Ser4047. The tract at residues 4285-4304 (VPNSSLSQTEPQVSNSHNPT) is disordered. A compositionally biased stretch (polar residues) spans 4286–4304 (PNSSLSQTEPQVSNSHNPT). A UBC core domain is found at 4598 to 4765 (ARARRLAQEA…IRQATVKWAM (168 aa)). The Glycyl thioester intermediate role is filled by Cys4691. A disordered region spans residues 4857–4882 (AGAEDTLTHDHVNPSSSKDLPSDFQL). The span at 4869–4882 (NPSSSKDLPSDFQL) shows a compositional bias: polar residues.

The protein belongs to the BIRC6 family. Homodimer; antiparallel. Interacts with DIABLO/SMAC, likely with higher affinity to SMAC dimer than SMAC monomer; this interaction blocks the substrate-binding site and inhibits the caspase inhibition activity of BIRC6. Interacts with RNF41, KIF23/MKLP1, USP8/UBPY, BIRC5/survivin, MAP2K1/MEK1, RAB8A/RAB8, RAB11A/RAB11, PLK1, EXOC3/SEC6 and EXOC4/SEC8. In terms of processing, ubiquitinated. Ubiquitination is mediated by RNF41 E3 ligase and leads to proteasomal degradation, impairing inhibition of apoptosis. Deubiquitinated by USP8/UBPY. Autoubiquitinated; mediated by E1 ubiquitin activating enzyme UBA6. Post-translationally, proteolytically cleaved. Acts as substrate for CASP3, CASP6, CASP7, CASP9 and HTRA2. As to expression, widely expressed. Highly expressed in the brain and kidney.

The protein localises to the golgi apparatus. It is found in the trans-Golgi network membrane. Its subcellular location is the endosome. It localises to the cytoplasm. The protein resides in the cytoskeleton. The protein localises to the spindle pole. It is found in the microtubule organizing center. Its subcellular location is the centrosome. It localises to the midbody. The protein resides in the midbody ring. The enzyme catalyses S-ubiquitinyl-[E1 ubiquitin-activating enzyme]-L-cysteine + [acceptor protein]-L-lysine = [E1 ubiquitin-activating enzyme]-L-cysteine + N(6)-monoubiquitinyl-[acceptor protein]-L-lysine.. Its activity is regulated as follows. Inhibited by DIABLO/SMAC, which competes for the substrate-binding sites on BIRC6. BIRC6 inhibits caspases and protease by ubiquitination but BIRC6 itself is subjected to protease cleavage by CASP3, CASP6, CASP7, CASP9 and HTRA2 by protease cleavage. Functionally, anti-apoptotic protein known as inhibitor of apoptosis (IAP) which can regulate cell death by controlling caspases and by acting as an E3 ubiquitin-protein ligase. Unlike most IAPs, does not contain a RING domain and it is not a RING-type E3 ligase. Instead acts as a dual E2/E3 enzyme that combines ubiquitin conjugating (E2) and ubiquitin ligase (E3) activities in a single polypeptide. Ubiquitination is mediated by a non-canonical E1 ubiquitin activating enzyme UBA6. Ubiquitinates CASP3, CASP7 and CASP9 and inhibits their caspase activity; also ubiquitinates their procaspases but to a weaker extent. Ubiquitinates pro-apoptotic factors DIABLO/SMAC and HTRA2. DIABLO/SMAC antagonizes the caspase inhibition activity of BIRC6 by competing for the same binding sites as the caspases. Ubiquitinates the autophagy protein MAP1LC3B; this activity is also inhibited by DIABLO/SMAC. Important regulator for the final stages of cytokinesis. Crucial for normal vesicle targeting to the site of abscission, but also for the integrity of the midbody and the midbody ring, and its striking ubiquitin modification. Required for normal placenta development. In Mus musculus (Mouse), this protein is Dual E2 ubiquitin-conjugating enzyme/E3 ubiquitin-protein ligase BIRC6 (Birc6).